We begin with the raw amino-acid sequence, 254 residues long: Imidazole glycerol phosphate synthase subunit HisF (254 aa).

Catalysis depends on residues Asp12 and Asp131.

It belongs to the HisA/HisF family. In terms of assembly, heterodimer of HisH and HisF.

The protein resides in the cytoplasm. It catalyses the reaction 5-[(5-phospho-1-deoxy-D-ribulos-1-ylimino)methylamino]-1-(5-phospho-beta-D-ribosyl)imidazole-4-carboxamide + L-glutamine = D-erythro-1-(imidazol-4-yl)glycerol 3-phosphate + 5-amino-1-(5-phospho-beta-D-ribosyl)imidazole-4-carboxamide + L-glutamate + H(+). Its pathway is amino-acid biosynthesis; L-histidine biosynthesis; L-histidine from 5-phospho-alpha-D-ribose 1-diphosphate: step 5/9. In terms of biological role, IGPS catalyzes the conversion of PRFAR and glutamine to IGP, AICAR and glutamate. The HisF subunit catalyzes the cyclization activity that produces IGP and AICAR from PRFAR using the ammonia provided by the HisH subunit. This chain is Imidazole glycerol phosphate synthase subunit HisF, found in Rhizorhabdus wittichii (strain DSM 6014 / CCUG 31198 / JCM 15750 / NBRC 105917 / EY 4224 / RW1) (Sphingomonas wittichii).